A 329-amino-acid polypeptide reads, in one-letter code: Probable quinone oxidoreductase (329 aa).

At serine 191 the chain carries Phosphoserine.

It belongs to the zinc-containing alcohol dehydrogenase family. Quinone oxidoreductase subfamily.

It localises to the cytoplasm. Its subcellular location is the nucleus. It carries out the reaction 2 a quinone + NADPH + H(+) = 2 a 1,4-benzosemiquinone + NADP(+). The sequence is that of Probable quinone oxidoreductase (zta1) from Schizosaccharomyces pombe (strain 972 / ATCC 24843) (Fission yeast).